The chain runs to 1489 residues: WD repeat-containing protein 7 (1489 aa).

WD repeat units lie at residues 17-56 (APTH…EVNP), 62-104 (GHTA…CIEF), 156-199 (ISPD…SGMQ), 324-366 (VICP…EKQE), 404-443 (NEPL…IVQL), 462-507 (GHRN…MKHI), and 558-597 (RHLF…LDRC). 2 disordered regions span residues 754–783 (IKEH…YRAS) and 911–947 (GDHM…QGQI). A compositionally biased stretch (basic and acidic residues) spans 767 to 782 (EARRQSREDSDPEYRA). Residue S935 is modified to Phosphoserine. WD repeat units lie at residues 1350 to 1389 (PAIC…CQTI) and 1391 to 1431 (GHKG…LGSI). S1455 is subject to Phosphoserine.

The protein is WD repeat-containing protein 7 (Wdr7) of Mus musculus (Mouse).